The sequence spans 438 residues: Enolase (438 aa).

Residue glutamine 164 coordinates (2R)-2-phosphoglycerate. Glutamate 206 serves as the catalytic Proton donor. Positions 243, 289, and 316 each coordinate Mg(2+). Residues lysine 341, arginine 370, serine 371, and lysine 392 each contribute to the (2R)-2-phosphoglycerate site. Lysine 341 (proton acceptor) is an active-site residue.

The protein belongs to the enolase family. The cofactor is Mg(2+).

The protein resides in the cytoplasm. Its subcellular location is the secreted. It localises to the cell surface. It catalyses the reaction (2R)-2-phosphoglycerate = phosphoenolpyruvate + H2O. It functions in the pathway carbohydrate degradation; glycolysis; pyruvate from D-glyceraldehyde 3-phosphate: step 4/5. Catalyzes the reversible conversion of 2-phosphoglycerate (2-PG) into phosphoenolpyruvate (PEP). It is essential for the degradation of carbohydrates via glycolysis. In Borrelia garinii subsp. bavariensis (strain ATCC BAA-2496 / DSM 23469 / PBi) (Borreliella bavariensis), this protein is Enolase.